The following is a 3175-amino-acid chain: Replicase polyprotein 1ab (3175 aa).

The C4-type; atypical zinc finger occupies 25–44 (CEHGAGLCCEVDGSTLCAEC). The 91-residue stretch at 66 to 156 (SPVPVGHKFL…PAANSLIVTT (91 aa)) folds into the Peptidase C31 domain. Residues 157–260 (DQEQDGFCWL…WSCLPAGNYG (104 aa)) enclose the Peptidase C32 domain. Catalysis depends on for Nsp1 papain-like cysteine proteinase activity residues Cys-164 and His-230. An OTU-like region spans residues 261–339 (GYNPPGDGAC…KQHWRVKRAK (79 aa)). The Peptidase C33 domain occupies 261-360 (GYNPPGDGAC…RGICNCQRMS (100 aa)). Catalysis depends on Cys-270, which acts as the For Nsp2 cysteine proteinase activity. Cys-319 serves as a coordination point for Zn(2+). The active-site For Nsp2 cysteine proteinase activity is His-332. Zn(2+)-binding residues include Cys-349, Cys-354, and Cys-356. The interval 386–451 (VVTPEGQPRP…TRLQGASTQE (66 aa)) is disordered. Helical transmembrane passes span 530 to 550 (AVIA…SFAI), 551 to 571 (GLIP…SSAN), 625 to 645 (FDAA…ILYL), 829 to 849 (LIGG…STFT), 903 to 923 (YWIA…RLAI), 935 to 955 (LVLL…SLAG), and 977 to 997 (LVTM…LMGL). Residues 530 to 645 (AVIACLLPIW…DLCSFAILYL (116 aa)) are HD1. Positions 829-997 (LIGGWIYGIC…ALAVYSLMGL (169 aa)) are HD2. The Peptidase S32 domain maps to 1065 to 1268 (GLFRSPKARG…MLIDGLSNRE (204 aa)). Residues His-1103, Asp-1129, and Ser-1184 each act as charge relay system; for 3C-like serine proteinase activity in the active site. A run of 4 helical transmembrane segments spans residues 1291–1311 (AYLP…KSVG), 1333–1353 (CLFH…WFYI), 1355–1375 (AAGT…MLFV), and 1385–1405 (GWAI…AALG). The interval 1291–1405 (AYLPYVLGFF…SITMLAAALG (115 aa)) is HD3. The N-linked (GlcNAc...) asparagine; by host glycan is linked to Asn-1501. Positions 1577 to 1614 (NDTPVKPMPSRRRRKGLPKGAQLEWDRHQEEKRNAGDD) are disordered. Basic and acidic residues predominate over residues 1600 to 1612 (EWDRHQEEKRNAG). The NiRAN domain maps to 1716–1883 (LANPVEAVNQ…DKVAAAVSGD (168 aa)). Positions 2116 to 2251 (KYCLETDLES…TTPNQHYAAS (136 aa)) constitute a RdRp catalytic domain. An AV ZBD domain is found at 2371-2438 (SAVCTVCGAA…SPKQMVPKVP (68 aa)). Zn(2+) is bound by residues Cys-2374, Cys-2377, Cys-2387, Cys-2392, Cys-2395, His-2399, His-2402, Cys-2403, Cys-2412, His-2414, Cys-2423, and Cys-2426. The region spanning 2496 to 2661 (PGSHIAVPLQ…LRHFVSLEPL (166 aa)) is the (+)RNA virus helicase ATP-binding domain. Residue 2528 to 2535 (GPPGSGKT) participates in ATP binding. In terms of domain architecture, (+)RNA virus helicase C-terminal spans 2662–2793 (RVCHRFGAAV…PPTACHLGQE (132 aa)). One can recognise an AV-Nsp11N/CoV-Nsp15M domain in the interval 2840–2930 (KISCLPRVAQ…LTEWVDGKAR (91 aa)). The 123-residue stretch at 2932–3054 (LPDSLFSSGR…MVWRNATFYV (123 aa)) folds into the NendoU domain. Catalysis depends on residues His-2963, His-2978, and Lys-3007.

Belongs to the arteriviridae polyprotein family. As to quaternary structure, nsp1 interacts with cellular transcription cofactor SND1/p100. Specific enzymatic cleavages in vivo by its own proteases yield mature proteins. There are two alternative pathways for processing. Either nsp4-5 is cleaved, which represents the major pathway or the nsp5-6 and nsp6-7 are processed, which represents the minor pathway. The major pathway occurs when nsp2 acts as a cofactor for nsp4.

It localises to the host nucleus. Its subcellular location is the host cytoplasm. The protein localises to the host membrane. The protein resides in the host perinuclear region. The catalysed reaction is RNA(n) + a ribonucleoside 5'-triphosphate = RNA(n+1) + diphosphate. It catalyses the reaction ATP + H2O = ADP + phosphate + H(+). It carries out the reaction Thiol-dependent hydrolysis of ester, thioester, amide, peptide and isopeptide bonds formed by the C-terminal Gly of ubiquitin (a 76-residue protein attached to proteins as an intracellular targeting signal).. The enzyme catalyses uridylyl-uridylyl-ribonucleotide-RNA = a 3'-end uridylyl-2',3'-cyclophospho-uridine-RNA + a 5'-end dephospho-ribonucleoside-RNA. The replicase polyprotein 1ab is a multifunctional protein: it contains the activities necessary for the transcription of negative stranded RNA, leader RNA, subgenomic mRNAs and progeny virion RNA as well as proteinases responsible for the cleavage of the polyprotein into functional products. Its function is as follows. Nsp1 is essential for viral subgenomic mRNA synthesis. In terms of biological role, nsp2 cysteine proteinase which cleaves the nsp2/nsp3 site in the polyprotein. Also displays deubiquitinating and deISGylase activities. The deubiquitinating activity cleaves both ubiquitinated and ISGylated products and may therefore regulate ubiquitin and ISG15 dependent host innate immunity. Functionally, the 3C-like serine proteinase chain is responsible for the majority of cleavages as it cleaves the C-terminus of the polyprotein. The helicase chain, which contains a zinc finger structure, displays RNA and DNA duplex-unwinding activities with 5' to 3' polarity. Its function is as follows. Plays a role in viral transcription/replication and prevents the simultaneous activation of host cell dsRNA sensors, such as MDA5/IFIH1, OAS, and PKR. Acts by degrading the 5'-polyuridines generated during replication of the poly(A) region of viral genomic and subgenomic RNAs. Catalyzes a two-step reaction in which a 2'3'-cyclic phosphate (2'3'-cP) is first generated by 2'-O transesterification, which is then hydrolyzed to a 3'-phosphate (3'-P). If not degraded, poly(U) RNA would hybridize with poly(A) RNA tails and activate host dsRNA sensors. This Equidae (horses) protein is Replicase polyprotein 1ab (rep).